A 248-amino-acid polypeptide reads, in one-letter code: Mannose-binding protein C (248 aa).

Positions 1 to 20 (MSLFPSLTLLLLSVVATSYS) are cleaved as a signal peptide. Residues 42-99 (GINGFPGKDGRDGTKGEKGEPGQGLRGLQGPPGKLGPPGNPGSSGSPGPKGQKGDPGE) enclose the Collagen-like domain. Positions 43-111 (INGFPGKDGR…DCESSLAASE (69 aa)) are disordered. The residue at position 47 (Pro47) is a 4-hydroxyproline. Residues 49 to 61 (KDGRDGTKGEKGE) are compositionally biased toward basic and acidic residues. 4 positions are modified to 4-hydroxyproline: Pro73, Pro79, Pro82, and Pro88. Residues 82-91 (PGSSGSPGPK) show a composition bias toward low complexity. Residues 112-130 (RKALQTEMARIKKWLTFSL) are a coiled coil. The 112-residue stretch at 134–245 (VGNKFFLTNG…CSSSHLALCE (112 aa)) folds into the C-type lectin domain. 2 disulfide bridges follow: Cys155/Cys244 and Cys222/Cys236.

As to quaternary structure, oligomeric complex of 3 or more homotrimers. Interacts with MASP1 and MASP2. Interacts with MEP1A and MEP1B and may inhibit their catalytic activity. Post-translationally, hydroxylation on proline residues within the sequence motif, GXPG, is most likely to be 4-hydroxy as this fits the requirement for 4-hydroxylation in vertebrates.

It localises to the secreted. Calcium-dependent lectin involved in innate immune defense. Binds mannose, fucose and N-acetylglucosamine on different microorganisms and activates the lectin complement pathway. Binds to late apoptotic cells, as well as to apoptotic blebs and to necrotic cells, but not to early apoptotic cells, facilitating their uptake by macrophages. The sequence is that of Mannose-binding protein C (MBL2) from Macaca fascicularis (Crab-eating macaque).